The chain runs to 319 residues: CCAAT/enhancer-binding protein homolog 1 (319 aa).

A n' domain; required for axon regeneration region spans residues Ser-53 to Arg-67. Residues Thr-163 to Lys-319 are disordered. A compositionally biased stretch (basic and acidic residues) spans Val-171–Ser-181. Residues Glu-182–Tyr-198 show a composition bias toward acidic residues. 4 stretches are compositionally biased toward basic and acidic residues: residues Leu-225–Arg-248, Lys-255–Glu-274, Ser-281–Asp-291, and Pro-302–Lys-319. One can recognise a bZIP domain in the interval Glu-233–Met-308. Residues Lys-237–Arg-271 are basic motif. The interval Leu-275–Met-308 is leucine-zipper.

This sequence belongs to the bZIP family. C/EBP subfamily. In terms of assembly, may interact with transcription factor ets-4. May interact (via N-terminus) with nipi-3. May interact (via N-terminus) with importin subunit alpha ima-3. In terms of tissue distribution, expressed in touch and motor neurons.

The protein localises to the synapse. The protein resides in the cytoplasm. It localises to the nucleus. It is found in the cell projection. Its subcellular location is the axon. Functionally, transcription factor. Binds to promoter regions of target genes, perhaps at the motif 5'-[AGCT]TT[AGT][TC]GAAA[ACT]-3'. Modulates expression of genes involved in development and in stress responses, including those regulating the p38/MAPK signaling pathways such as MAPKK sek-1 and phosphatase vhp-1. Involved in innate immunity. Plays a role in repressing the response to infection by the Gram-negative bacterium P.aeruginosa, perhaps acting independently of the pmk-1 or pmk-3 p38/MAPK pathways. However, also plays a protective role in the response to infection by P.aeruginosa. Required in axonal regrowth following injury and synaptogenesis. Following axon injury, in concert with transcription factor ets-4, activates expression of receptor tyrosine kinase svh-2. May function downstream of the Ca2+-activated p38/MAPK pathway to promote axon regeneration. Plays a role in modulating polymerization of neuronal microtubules. Involved in modulating lipid homeostasis. This chain is CCAAT/enhancer-binding protein homolog 1, found in Caenorhabditis elegans.